The sequence spans 33 residues: Gaegurin-3 (33 aa).

A disulfide bridge connects residues C27 and C33.

Belongs to the frog skin active peptide (FSAP) family. Brevinin subfamily. In terms of assembly, monomer. In terms of tissue distribution, expressed by the skin glands.

It is found in the secreted. Its function is as follows. Has a non-hemolytic activity. Has a broad spectrum of activity against both Gram-positive and Gram-negative bacteria, fungi and protozoa. This chain is Gaegurin-3 (GGN3), found in Glandirana rugosa (Japanese wrinkled frog).